Reading from the N-terminus, the 319-residue chain is Cytochrome f (319 aa).

An N-terminal signal peptide occupies residues 1–35; sequence MQNRNISYWIKKCVIQSISIVILMKIIAWPSISEA. Positions 36, 56, 59, and 60 each coordinate heme. The chain crosses the membrane as a helical span at residues 285 to 305; that stretch reads VQSLLVFFVSVTLAQIFLVLK.

The protein belongs to the cytochrome f family. In terms of assembly, the 4 large subunits of the cytochrome b6-f complex are cytochrome b6, subunit IV (17 kDa polypeptide, petD), cytochrome f and the Rieske protein, while the 4 small subunits are PetG, PetL, PetM and PetN. The complex functions as a dimer. It depends on heme as a cofactor.

The protein resides in the plastid. It localises to the chloroplast thylakoid membrane. In terms of biological role, component of the cytochrome b6-f complex, which mediates electron transfer between photosystem II (PSII) and photosystem I (PSI), cyclic electron flow around PSI, and state transitions. The sequence is that of Cytochrome f from Physcomitrium patens (Spreading-leaved earth moss).